The following is a 168-amino-acid chain: Short form salivary protein D7R2 (168 aa).

An N-terminal signal peptide occupies residues 1-21; sequence MFKKLLLSVGLVWCLISLGQA. 3 cysteine pairs are disulfide-bonded: Cys30–Cys62, Cys43–Cys168, and Cys101–Cys120. Noradrenaline contacts are provided by Glu31 and Arg46. Glu31 contributes to the serotonin binding site. Serotonin is bound by residues His59, Tyr118, Asp135, and Glu138. Histamine contacts are provided by Tyr118, Asp135, and Glu138. Residues Asp135 and Glu138 each coordinate noradrenaline.

The protein belongs to the PBP/GOBP family. In terms of tissue distribution, female saliva (at protein level). Female salivary gland. Not detected in female carcass without salivary glands. Not detected in male tissues.

It localises to the secreted. Modulates blood feeding of female mosquitoes on vertebrate species by binding and sequestering different mediators involved in the host response. Binds serotonin, noradrenaline, histamine and adrenaline. Inhibits histamine-, serotonin- and noradrenaline-induced smooth muscle contraction. Exhibits vasodilating activity. This Anopheles gambiae (African malaria mosquito) protein is Short form salivary protein D7R2.